The chain runs to 187 residues: UPF0301 protein HS_0009 (187 aa).

Belongs to the UPF0301 (AlgH) family.

In Histophilus somni (strain 129Pt) (Haemophilus somnus), this protein is UPF0301 protein HS_0009.